The sequence spans 164 residues: Protein phosphatase 1 regulatory subunit 14C (164 aa).

Over residues 1 to 19 (MSVVTGGGEAAGGTSGGGA) the composition is skewed to gly residues. Residues 1 to 72 (MSVVTGGGEA…QRRHQQGKVT (72 aa)) are disordered. Residue Ser-2 is modified to N-acetylserine. Ser-25 is subject to Phosphoserine. Arg-27 is subject to Omega-N-methylarginine. Ser-33 carries the phosphoserine modification. Over residues 50 to 62 (VATVAAAGQVQQQ) the composition is skewed to low complexity. Thr-72 bears the Phosphothreonine; by ILK1 mark.

The protein belongs to the PP1 inhibitor family. In terms of processing, has over 600-fold higher inhibitory activity when phosphorylated, creating a molecular switch for regulating the phosphorylation status of PPP1CA substrates and smooth muscle contraction. The main inhibitory site appears to be Thr-72.

The protein localises to the endomembrane system. Its function is as follows. Inhibitor of the PP1 regulatory subunit PPP1CA. The chain is Protein phosphatase 1 regulatory subunit 14C (Ppp1r14c) from Rattus norvegicus (Rat).